The sequence spans 437 residues: Trigger factor (437 aa).

The PPIase FKBP-type domain occupies 161–246; the sequence is GDRVNIDFKG…VNKVEGKALP (86 aa).

Belongs to the FKBP-type PPIase family. Tig subfamily.

The protein resides in the cytoplasm. The catalysed reaction is [protein]-peptidylproline (omega=180) = [protein]-peptidylproline (omega=0). In terms of biological role, involved in protein export. Acts as a chaperone by maintaining the newly synthesized protein in an open conformation. Functions as a peptidyl-prolyl cis-trans isomerase. The protein is Trigger factor of Alcanivorax borkumensis (strain ATCC 700651 / DSM 11573 / NCIMB 13689 / SK2).